Reading from the N-terminus, the 321-residue chain is Ferredoxin--NADP reductase (321 aa).

FAD-binding residues include glutamate 33, glutamine 41, tyrosine 46, valine 86, leucine 119, aspartate 277, and serine 318.

This sequence belongs to the ferredoxin--NADP reductase type 2 family. As to quaternary structure, homodimer. The cofactor is FAD.

The catalysed reaction is 2 reduced [2Fe-2S]-[ferredoxin] + NADP(+) + H(+) = 2 oxidized [2Fe-2S]-[ferredoxin] + NADPH. In Lactococcus lactis subsp. cremoris (strain SK11), this protein is Ferredoxin--NADP reductase.